The primary structure comprises 422 residues: uncharacterized protein (422 aa).

This sequence belongs to the asfivirus K421R family.

It is found in the virion. This is an uncharacterized protein from Ornithodoros (relapsing fever ticks).